Consider the following 179-residue polypeptide: UPF0227 protein VS_2073 (179 aa).

It belongs to the UPF0227 family.

The chain is UPF0227 protein VS_2073 from Vibrio atlanticus (strain LGP32) (Vibrio splendidus (strain Mel32)).